The primary structure comprises 176 residues: ATP-dependent protease subunit HslV (176 aa).

Residue threonine 4 is part of the active site. The Na(+) site is built by alanine 159, cysteine 162, and threonine 165.

It belongs to the peptidase T1B family. HslV subfamily. A double ring-shaped homohexamer of HslV is capped on each side by a ring-shaped HslU homohexamer. The assembly of the HslU/HslV complex is dependent on binding of ATP.

The protein resides in the cytoplasm. The catalysed reaction is ATP-dependent cleavage of peptide bonds with broad specificity.. Its activity is regulated as follows. Allosterically activated by HslU binding. Functionally, protease subunit of a proteasome-like degradation complex believed to be a general protein degrading machinery. This Wolbachia sp. subsp. Brugia malayi (strain TRS) protein is ATP-dependent protease subunit HslV.